A 95-amino-acid chain; its full sequence is Large ribosomal subunit protein uL23 (95 aa).

This sequence belongs to the universal ribosomal protein uL23 family. As to quaternary structure, part of the 50S ribosomal subunit. Contacts protein L29, and trigger factor when it is bound to the ribosome.

Functionally, one of the early assembly proteins it binds 23S rRNA. One of the proteins that surrounds the polypeptide exit tunnel on the outside of the ribosome. Forms the main docking site for trigger factor binding to the ribosome. This Desulfitobacterium hafniense (strain Y51) protein is Large ribosomal subunit protein uL23.